Consider the following 252-residue polypeptide: Maintenance of carboxysome distribution protein A (252 aa).

Positions 11, 12, 14, 15, 16, 17, 41, 147, 151, 182, 183, 216, 217, and 218 each coordinate ATP. Threonine 16 is a Mg(2+) binding site.

The protein belongs to the ParA family. McdA subfamily. As to quaternary structure, self-associates (probably a homodimer), interacts with McdB probably via the C-terminus of both proteins. Shows no signs of filament formation. Homodimerizes in the presence of ATP, making extra nucleotide contacts than with ADP or AMP-PNP. Each subunit binds 1 ATP molecule; Glu-147, Lys-151 and Arg-183 cross the dimer interface to contact ATP in the other subunit, while Phe-182, Arg-183 and Phe-221 stack with the adenine base in their own subunit.

Its subcellular location is the cytoplasm. The protein localises to the nucleoid. The enzyme catalyses ATP + H2O = ADP + phosphate + H(+). McdA and McdB together mediate carboxysome (Cb) spacing, size, ultrastructure and probably inheritance in the cell. Together they prevent Cb aggregation. McdA is an ATPase that forms dynamic gradients on the nucleoid in response to adapter protein McdB, which associates with carboxysomes. The interplay between McdA gradients on the nucleoid and McdB-bound carboxysomes result in the equal spacing of Cbs along the cell length. Binds nucleoid DNA in an ATP-dependent manner; neither ADP nor ATP-gamma-S support DNA binding. Upon ATP-binding dimerizes and binds nucleoid DNA; the (McdA-ATP)2 dimer transiently binds McdB-bound Cbs. McdA's ATPase activity is stimulated 2-fold by DNA and McdB; ATP hydrolysis causes McdA release from DNA. Overexpression leads to loss of McdA oscillation, diffuse nucleoid staining by McdA with formation of large carboxysome aggregates that are in regions depleted of McdA; McdA remains nucleoid-associated. Functionally, mutagenesis studies (characterized in vivo) suggest ATP binding, protein dimerization and a conformational change are necessary for nucleoid DNA-binding and binding to McdB-bound Cbs, which tethers Cbs to the nucleoid. Eventual McdB-stimulated ATP hydrolysis causes de-dimerization of McdA which no longer binds the nucleoid and releases McdB and Cbs. McdB-bound Cbs then move to a region of higher McdA concentration, distributing Cbs across the nucleoid. Its function is as follows. Incorrect positioning (aggregation) of carboxysomes results in reduced CO(2) fixation by encapsulated ribulose-1,5-bisphosphate carboxylase (RuBisCO, cbbL/cbbS), which leads to slower growth, cell elongation, asymmetric cell division and an increase in RuBisCO levels. The protein is Maintenance of carboxysome distribution protein A of Synechococcus elongatus (strain ATCC 33912 / PCC 7942 / FACHB-805) (Anacystis nidulans R2).